Here is a 461-residue protein sequence, read N- to C-terminus: tRNA modification GTPase MnmE (461 aa).

(6S)-5-formyl-5,6,7,8-tetrahydrofolate is bound by residues R22, E87, and R126. The region spanning 222–382 (GITAVIAGKP…LENKLYEILI (161 aa)) is the TrmE-type G domain. N232 contributes to the K(+) binding site. Residues 232–237 (NVGKSS), 251–257 (TDIPGTT), 276–279 (DTAG), and 363–365 (SAR) contribute to the GTP site. Mg(2+) is bound at residue S236. K(+) is bound by residues T251, I253, and T256. Position 257 (T257) interacts with Mg(2+). A (6S)-5-formyl-5,6,7,8-tetrahydrofolate-binding site is contributed by K461.

The protein belongs to the TRAFAC class TrmE-Era-EngA-EngB-Septin-like GTPase superfamily. TrmE GTPase family. As to quaternary structure, homodimer. Heterotetramer of two MnmE and two MnmG subunits. The cofactor is K(+).

It is found in the cytoplasm. In terms of biological role, exhibits a very high intrinsic GTPase hydrolysis rate. Involved in the addition of a carboxymethylaminomethyl (cmnm) group at the wobble position (U34) of certain tRNAs, forming tRNA-cmnm(5)s(2)U34. This is tRNA modification GTPase MnmE from Carboxydothermus hydrogenoformans (strain ATCC BAA-161 / DSM 6008 / Z-2901).